The sequence spans 128 residues: RutC family protein BUsg_359 (128 aa).

This sequence belongs to the RutC family.

This is RutC family protein BUsg_359 from Buchnera aphidicola subsp. Schizaphis graminum (strain Sg).